The chain runs to 360 residues: UDP-N-acetylglucosamine--N-acetylmuramyl-(pentapeptide) pyrophosphoryl-undecaprenol N-acetylglucosamine transferase (360 aa).

UDP-N-acetyl-alpha-D-glucosamine contacts are provided by Ser198 and Gln289.

Belongs to the glycosyltransferase 28 family. MurG subfamily.

It is found in the cell membrane. The catalysed reaction is Mur2Ac(oyl-L-Ala-gamma-D-Glu-L-Lys-D-Ala-D-Ala)-di-trans,octa-cis-undecaprenyl diphosphate + UDP-N-acetyl-alpha-D-glucosamine = beta-D-GlcNAc-(1-&gt;4)-Mur2Ac(oyl-L-Ala-gamma-D-Glu-L-Lys-D-Ala-D-Ala)-di-trans,octa-cis-undecaprenyl diphosphate + UDP + H(+). It participates in cell wall biogenesis; peptidoglycan biosynthesis. Functionally, cell wall formation. Catalyzes the transfer of a GlcNAc subunit on undecaprenyl-pyrophosphoryl-MurNAc-pentapeptide (lipid intermediate I) to form undecaprenyl-pyrophosphoryl-MurNAc-(pentapeptide)GlcNAc (lipid intermediate II). The chain is UDP-N-acetylglucosamine--N-acetylmuramyl-(pentapeptide) pyrophosphoryl-undecaprenol N-acetylglucosamine transferase from Streptococcus pyogenes serotype M3 (strain SSI-1).